A 391-amino-acid chain; its full sequence is MQVTPIAMEDASFAYRLGTECTEDVVARLATLGASSYLVVADTTVAGLYGHDLTARIDKEAGPAHLLTHESGEVHKDLTTVSVLAEQALERGADRRSVVVALGGGVTGNITGLMASLLFRGIRLVHVPTTVVAMLDSVLSLKQAVNATFGKNLVGTFYQPVEVLADTAFLRTLPPREIRSGLGEVVKNALAIRPAMLDRLGDALRADARYDDETLRWIIAESLTAKADVTRDDKHERRTGLVLEYGHTAGHAIEHASRGEVAHGAGVAVGMTIAAEVSRRLGHAGPDFVALHRELVAAAGVEPAVPAHVDPALVKNWLAYDNKRGYLDSPPGHTPMVLLSAPGEVLHTGPMPLVPVPLALLEEAVDEAARRGRDAAPAAAYVGPPAAGPLP.

NAD(+) is bound by residues aspartate 42, 73–76, 105–109, 129–130, 140–142, and 151–152; these read EVHK, GVTGN, TT, SLK, and KN. Residue lysine 142 is part of the active site. Glutamate 184 is a binding site for Co(2+). The active site involves glutamate 244. Residues histidine 247 and histidine 263 each coordinate Co(2+).

The protein belongs to the sugar phosphate cyclases superfamily. DOI synthase family. It depends on NAD(+) as a cofactor. The cofactor is Co(2+).

It catalyses the reaction D-glucose 6-phosphate = 2-deoxy-L-scyllo-inosose + phosphate. It participates in metabolic intermediate biosynthesis; 2-deoxystreptamine biosynthesis; 2-deoxystreptamine from D-glucose 6-phosphate: step 1/4. Its pathway is antibiotic biosynthesis; ribostamycin biosynthesis. Catalyzes the intramolecular carbocycle formation from D-glucose-6-phosphate to 2-deoxy-scyllo-inosose (DOI). The polypeptide is 2-deoxy-scyllo-inosose synthase (rbmA) (Streptomyces ribosidificus).